We begin with the raw amino-acid sequence, 173 residues long: MKILKPITFRKPRIISQKKVLRSKLSKVKKSPWYKAKKNYVSFRQRLVLAKKNPNKKRYYLFFSKKRNNVFLTITDVIGRVVVSQSAGSCKITTKKKKRSPDTLKTVSASVAKIARAKNIKYLFKFFMNTNQTKIGKTIFESFKKTGLFILQGVVVKNKSHGLLMRKKKAKRL.

Belongs to the universal ribosomal protein uS11 family.

The protein resides in the mitochondrion. The sequence is that of Small ribosomal subunit protein uS11m (RPS11) from Acanthamoeba castellanii (Amoeba).